Reading from the N-terminus, the 107-residue chain is Iron-binding protein IscA (107 aa).

Fe cation contacts are provided by C35, C99, and C101.

This sequence belongs to the HesB/IscA family. Homodimer; may form tetramers and higher multimers. It depends on Fe cation as a cofactor.

Is able to transfer iron-sulfur clusters to apo-ferredoxin. Multiple cycles of [2Fe2S] cluster formation and transfer are observed, suggesting that IscA acts catalytically. Recruits intracellular free iron so as to provide iron for the assembly of transient iron-sulfur cluster in IscU in the presence of IscS, L-cysteine and the thioredoxin reductase system TrxA/TrxB. The polypeptide is Iron-binding protein IscA (Cronobacter sakazakii (strain ATCC BAA-894) (Enterobacter sakazakii)).